The following is a 129-amino-acid chain: L-ectoine synthase (129 aa).

Belongs to the ectoine synthase family.

The catalysed reaction is (2S)-4-acetamido-2-aminobutanoate = L-ectoine + H2O. It participates in amine and polyamine biosynthesis; ectoine biosynthesis; L-ectoine from L-aspartate 4-semialdehyde: step 3/3. In terms of biological role, catalyzes the circularization of gamma-N-acetyl-alpha,gamma-diaminobutyric acid (ADABA) to ectoine (1,4,5,6-tetrahydro-2-methyl-4-pyrimidine carboxylic acid), which is an excellent osmoprotectant. The chain is L-ectoine synthase from Halalkalibacterium halodurans (strain ATCC BAA-125 / DSM 18197 / FERM 7344 / JCM 9153 / C-125) (Bacillus halodurans).